The primary structure comprises 137 residues: Large ribosomal subunit protein uL16 (137 aa).

This sequence belongs to the universal ribosomal protein uL16 family. In terms of assembly, part of the 50S ribosomal subunit.

Functionally, binds 23S rRNA and is also seen to make contacts with the A and possibly P site tRNAs. The protein is Large ribosomal subunit protein uL16 of Xanthobacter autotrophicus (strain ATCC BAA-1158 / Py2).